Reading from the N-terminus, the 306-residue chain is D-alanine--D-alanine ligase (306 aa).

Residues 107–300 form the ATP-grasp domain; the sequence is KAAYRTAGLP…FGQLCAWLVE (194 aa). 134-184 is a binding site for ATP; sequence IAPPYVVKPNNEGSSVGIYIVHEATNSPPQLSEEMPAQVMVEAYAPGREMT. Positions 251, 267, and 269 each coordinate Mg(2+).

Belongs to the D-alanine--D-alanine ligase family. Mg(2+) is required as a cofactor. Requires Mn(2+) as cofactor.

The protein localises to the cytoplasm. It carries out the reaction 2 D-alanine + ATP = D-alanyl-D-alanine + ADP + phosphate + H(+). Its pathway is cell wall biogenesis; peptidoglycan biosynthesis. Its function is as follows. Cell wall formation. The protein is D-alanine--D-alanine ligase of Ruegeria sp. (strain TM1040) (Silicibacter sp.).